The following is a 144-amino-acid chain: Peptide methionine sulfoxide reductase B7 (144 aa).

Residues aspartate 19–alanine 140 enclose the MsrB domain. Zn(2+)-binding residues include cysteine 58, cysteine 61, cysteine 104, and cysteine 107. Cysteine 76 and cysteine 129 are disulfide-bonded. The Nucleophile role is filled by cysteine 129.

The protein belongs to the MsrB Met sulfoxide reductase family. Requires Zn(2+) as cofactor.

It is found in the cytoplasm. The protein resides in the cytosol. The enzyme catalyses L-methionyl-[protein] + [thioredoxin]-disulfide + H2O = L-methionyl-(R)-S-oxide-[protein] + [thioredoxin]-dithiol. Catalyzes the reduction of methionine sulfoxide (MetSO) to methionine in proteins. Plays a protective role against oxidative stress by restoring activity to proteins that have been inactivated by methionine oxidation. MSRB family specifically reduces the MetSO R-enantiomer. This is Peptide methionine sulfoxide reductase B7 (MSRB7) from Arabidopsis thaliana (Mouse-ear cress).